A 110-amino-acid chain; its full sequence is BolA-like protein 3 (110 aa).

Belongs to the BolA/IbaG family. As to quaternary structure, interacts with NFU1.

Its subcellular location is the mitochondrion. In terms of biological role, acts as a mitochondrial iron-sulfur (Fe-S) cluster assembly factor that facilitates (Fe-S) cluster insertion into a subset of mitochondrial proteins. Probably acts together with NFU1. The protein is BolA-like protein 3 (Bola3) of Mus musculus (Mouse).